A 188-amino-acid polypeptide reads, in one-letter code: Kininogen (188 aa).

N-linked (GlcNAc...) asparagine glycosylation is found at Asn36, Asn150, and Asn182.

Bradykinin is released from kininogen by kallikrein. Post-translationally, N-glycosylated. Contains O-acetylated sialic acids as terminal elements on biantennary and triantennary N-glycans.

Its function is as follows. Inhibits papain and ficin (cysteine proteinases) but not trypsin (a serine proteinase). The sequence is that of Kininogen from Anarhichas minor (Arctic spotted wolffish).